The following is a 1342-amino-acid chain: Subtilisin-like protease 2 (1342 aa).

Positions 1-18 are cleaved as a signal peptide; that stretch reads MLNIIYVVSLILIKFIFY. The propeptide at 19–687 is inhibition peptide; that stretch reads KECNNNNNYY…KLYNNKYSFL (669 aa). 2 disordered regions span residues 85–111 and 143–171; these read EKKTKGEENEIEKKKENDLEEKKENEI and ADVSNNDNSGHEENNKHKLNKKNSSNYKN. N-linked (GlcNAc...) asparagine glycans are attached at residues asparagine 165, asparagine 343, asparagine 451, asparagine 455, and asparagine 493. The disordered stretch occupies residues 415 to 474; sequence KKSKKEKENTQQKGGNNPNVDINILNNNNNNNNNNNNNSNNNSNSMNDEEINYNNNNNKE. A compositionally biased stretch (low complexity) spans 430-474; sequence NNPNVDINILNNNNNNNNNNNNNSNNNSNSMNDEEINYNNNNNKE. Positions 500–531 are disordered; sequence IYHNKNDNSYKNKKEGTGKNNDNNDPNNNNNK. A compositionally biased stretch (basic and acidic residues) spans 503-516; that stretch reads NKNDNSYKNKKEGT. Low complexity predominate over residues 518–531; the sequence is KNNDNNDPNNNNNK. Asparagine 551, asparagine 642, and asparagine 729 each carry an N-linked (GlcNAc...) asparagine glycan. Topologically, residues 688–1137 are extracellular; sequence NKFLNIEPLI…LYNLYEYDSH (450 aa). The 294-residue stretch at 727 to 1020 folds into the Peptidase S8 domain; it reads TWNLSIIRVF…DSLVNAEGAV (294 aa). Residues aspartate 755 and histidine 798 each act as charge relay system in the active site. N-linked (GlcNAc...) asparagine glycans are attached at residues asparagine 821, asparagine 857, asparagine 893, and asparagine 951. Residue serine 961 is the Charge relay system of the active site. N-linked (GlcNAc...) asparagine glycans are attached at residues asparagine 1010 and asparagine 1106. A helical transmembrane segment spans residues 1138-1158; it reads YLLASVILFFLALLSIFVGMI. Residues 1159–1342 lie on the Cytoplasmic side of the membrane; the sequence is YMKSRKHSDK…MNQLDDMFMK (184 aa).

This sequence belongs to the peptidase S8 family. In terms of processing, proteolytically cleaved at the N-terminus to generate a 74kDa intermediate which is further processed into a 72kDa form. The first maturation cleavage is autocatalytic, occurs in the ER and is necessary for the subsequent SUB2 trafficking to the microneme. The second cleavage may be mediated by PMX/plasmepsin X.

The protein resides in the cell membrane. The protein localises to the cytoplasmic vesicle. Its subcellular location is the secretory vesicle. It localises to the microneme membrane. The enzyme catalyses Hydrolysis of proteins with broad specificity for peptide bonds, and a preference for a large uncharged residue in P1. Hydrolyzes peptide amides.. Its activity is regulated as follows. Activation may be calcium-dependent. Inhibited by the non-covalent interaction with the cleaved propeptide. Its function is as follows. Serine protease which plays an essential role in the shedding of AMA1, MSP1 and MSP7 from the surface of the invading merozoite; this step is essential for productive invasion and the release of the adhesion between the erythrocyte and the merozoite. May cleave TRAMP/PTTRAMP, thereby shedding TRAMP from the merozoite surface during erythrocyte invasion. The protein is Subtilisin-like protease 2 of Plasmodium falciparum.